A 276-amino-acid polypeptide reads, in one-letter code: MTTTLEEQLSDKLQMMDETTDKVQGSSKQKDDSSIAASSDAKTASPSSSDSSTKVAAPESEFYNKAQKYWSEVPATVNGMLGGLGYISAIDIQGSNVFLREIRVPGNRLALDCGAGIGRVTRNLLIPRFSCVDLVEQDPAFADKAREYCTSEDGSRGKVGQIYNVGLQKFTPTQQYDLVWTQWVLGHLTDRDLVSFFRRIKQGLAPGAFLCLKENVSSSKKTVEDRNDSSVTRPLDSYEHFLKEAGFRIVRKVKQQNFPKGLFPVYMIACKPVSKE.

Positions 1-57 are disordered; that stretch reads MTTTLEEQLSDKLQMMDETTDKVQGSSKQKDDSSIAASSDAKTASPSSSDSSTKVAA. Residues 34–57 are compositionally biased toward low complexity; sequence SIAASSDAKTASPSSSDSSTKVAA. Residues Gly-114, Arg-119, 136–138, 167–168, and Gln-182 contribute to the S-adenosyl-L-methionine site; these read EQD and LQ.

It belongs to the methyltransferase superfamily. NTM1 family.

It carries out the reaction N-terminal L-alanyl-L-prolyl-L-lysyl-[protein] + 3 S-adenosyl-L-methionine = N-terminal N,N,N-trimethyl-L-alanyl-L-prolyl-L-lysyl-[protein] + 3 S-adenosyl-L-homocysteine + 3 H(+). The enzyme catalyses N-terminal L-seryl-L-prolyl-L-lysyl-[protein] + 3 S-adenosyl-L-methionine = N-terminal N,N,N-trimethyl-L-seryl-L-prolyl-L-lysyl-[protein] + 3 S-adenosyl-L-homocysteine + 3 H(+). It catalyses the reaction N-terminal L-prolyl-L-prolyl-L-lysyl-[protein] + 2 S-adenosyl-L-methionine = N-terminal N,N-dimethyl-L-prolyl-L-prolyl-L-lysyl-[protein] + 2 S-adenosyl-L-homocysteine + 2 H(+). Functionally, alpha-N-methyltransferase that methylates the N-terminus of target proteins containing the N-terminal motif [Ala/Pro/Ser]-Pro-Lys when the initiator Met is cleaved. Specifically catalyzes mono-, di- or tri-methylation of exposed alpha-amino group of Ala or Ser residue in the [Ala/Ser]-Pro-Lys motif and mono- or di-methylation of Pro in the Pro-Pro-Lys motif. This is Alpha N-terminal protein methyltransferase 1 (Ntmt) from Drosophila melanogaster (Fruit fly).